Reading from the N-terminus, the 104-residue chain is L-rhamnose mutarotase (104 aa).

Residue Tyr-18 coordinates substrate. The active-site Proton donor is His-22. Substrate-binding positions include Tyr-41 and 76 to 77; that span reads WW.

It belongs to the rhamnose mutarotase family. As to quaternary structure, homodimer.

The protein resides in the cytoplasm. It catalyses the reaction alpha-L-rhamnose = beta-L-rhamnose. It participates in carbohydrate metabolism; L-rhamnose metabolism. Functionally, involved in the anomeric conversion of L-rhamnose. The chain is L-rhamnose mutarotase from Citrobacter koseri (strain ATCC BAA-895 / CDC 4225-83 / SGSC4696).